A 367-amino-acid chain; its full sequence is Alanine racemase (367 aa).

The active-site Proton acceptor; specific for D-alanine is Lys-40. An N6-(pyridoxal phosphate)lysine modification is found at Lys-40. Arg-136 provides a ligand contact to substrate. Tyr-263 functions as the Proton acceptor; specific for L-alanine in the catalytic mechanism. Met-310 lines the substrate pocket.

Belongs to the alanine racemase family. Pyridoxal 5'-phosphate serves as cofactor.

The enzyme catalyses L-alanine = D-alanine. It participates in amino-acid biosynthesis; D-alanine biosynthesis; D-alanine from L-alanine: step 1/1. Its function is as follows. Catalyzes the interconversion of L-alanine and D-alanine. May also act on other amino acids. The protein is Alanine racemase (alr) of Streptococcus pneumoniae (strain 70585).